Consider the following 1745-residue polypeptide: Tight junction protein 1 (1745 aa).

The region spanning 23-110 (TVTLHRAPGF…NAKITIRRKK (88 aa)) is the PDZ 1 domain. The span at 102-112 (AKITIRRKKKV) shows a compositional bias: basic residues. The segment at 102–189 (AKITIRRKKK…QPAKPTKVTL (88 aa)) is disordered. Residues 123–136 (PVSDNEDDSYDEEV) show a composition bias toward acidic residues. Serine 125 carries the post-translational modification Phosphoserine. At tyrosine 132 the chain carries Phosphotyrosine. Residues 149–175 (RRSEKSWARDRSASRERSLSPRSDRRS) are compositionally biased toward basic and acidic residues. Residues serine 175, serine 178, and serine 179 each carry the phosphoserine modification. A Phosphothreonine modification is found at threonine 185. Residues 186–264 (KVTLVKSRKN…KLKMVVQRDE (79 aa)) enclose the PDZ 2 domain. Residues serine 212 and serine 241 each carry the phosphoserine modification. A Phosphothreonine modification is found at threonine 267. Phosphoserine is present on residues serine 275, serine 277, serine 280, serine 284, serine 290, serine 294, serine 297, serine 300, serine 323, serine 329, serine 334, serine 337, and serine 353. A disordered region spans residues 296–364 (ASDHSGRSHD…PVKHVDDHPP (69 aa)). Basic and acidic residues predominate over residues 299 to 308 (HSGRSHDRPP). Over residues 325–338 (HSTQSPQQPSNGSL) the composition is skewed to polar residues. Threonine 354 is subject to Phosphothreonine. Residues 421-502 (SMKLVKFRKG…GEEVTILAQK (82 aa)) form the PDZ 3 domain. The region spanning 516 to 584 (GDSFYIRTHF…PNKNRAEQLA (69 aa)) is the SH3 domain. The region spanning 610–791 (SKRNLRKSRE…WYGALKEAIQ (182 aa)) is the Guanylate kinase-like domain. Phosphoserine is present on residues serine 617 and serine 622. The segment at 633–876 (YERVVLREAG…GTPPESAITR (244 aa)) is occludin (OCLN)-binding region. Threonine 809 bears the Phosphothreonine mark. Residues serine 810 and serine 821 each carry the phosphoserine modification. Phosphotyrosine is present on tyrosine 822. 3 positions are modified to phosphoserine: serine 824, serine 828, and serine 837. 2 disordered regions span residues 825–944 (APGS…SASA) and 956–1042 (LEEP…YEPQ). 5 positions are modified to phosphothreonine: threonine 846, threonine 848, threonine 854, threonine 861, and threonine 868. The span at 879-892 (EPVREDSSGMHHEN) shows a compositional bias: basic and acidic residues. A compositionally biased stretch (low complexity) spans 893–906 (QTYPPYSPQAQPQA). Residue serine 912 is modified to Phosphoserine. A compositionally biased stretch (basic and acidic residues) spans 998–1014 (DPAKVYRKEPYSEEMMR). Position 1071 is a phosphoserine (serine 1071). Residues 1090-1586 (QWSYYDDKQP…STQPPEFDSG (497 aa)) are disordered. Basic and acidic residues predominate over residues 1106–1124 (ENQHPRDLDSRQHPEEASE). Serine 1138 carries the post-translational modification Phosphoserine. Phosphotyrosine is present on residues tyrosine 1139 and tyrosine 1164. The interval 1150–1370 (RTSTLRHEEQ…FDRRSFESKP (221 aa)) is actin-binding region (ABR). Basic and acidic residues-rich tracts occupy residues 1268–1285 (KMFENKRSASLENKKDVN) and 1335–1346 (PPEDIVRSNHYD). Position 1353 is a phosphotyrosine (tyrosine 1353). Serine 1365 carries the phosphoserine modification. The segment covering 1388 to 1399 (SQSQPNFSSYSS) has biased composition (low complexity). The span at 1401-1418 (GKPETDAVDRSFSEKRYD) shows a compositional bias: basic and acidic residues. At serine 1411 the chain carries Phosphoserine. Residues 1431–1445 (SQYSQPAPPLSSSSL) are compositionally biased toward low complexity. Composition is skewed to polar residues over residues 1455 to 1468 (EGNSVSLDFQNSYM) and 1510 to 1519 (AEQTQKTITP). The span at 1535–1544 (PFERKFESPK) shows a compositional bias: basic and acidic residues. Serine 1542 is subject to Phosphoserine. Residues 1561 to 1580 (SSKTPTSPKTLMKAHSSTQP) are compositionally biased toward polar residues. Serine 1614 carries the post-translational modification Phosphoserine. Positions 1631–1745 (ATARGIFNSN…NCVSVLIDHF (115 aa)) constitute a ZU5 domain.

This sequence belongs to the MAGUK family. Homodimer. Forms heterodimers TJP3. Forms a heterodimer (via PDZ2 domain) with TJP2/ZO2 (via PDZ2 domain). Interacts with OCLN, CALM, claudins, CGN/cingulin, CXADR, GJD3 and UBN1. Interacts (via ZU5 domain) with CDC42BPB. Interacts (via PDZ domain) with GJA1. Interacts (via PDZ domains) with ANKRD2. Interacts with POPDC1 (via the C-terminus cytoplasmic tail). Interacts with GJA12 and KIRREL1. Interacts with HSPA4. Interacts (via ZU5 domain) with MYZAP. Interacts with DLL1. Interacts with USP53 (via the C-terminal region). Interacts with DNMBP (via C-terminal domain); required for the apical cell-cell junction localization of DNMBP. Interacts with SPEF1. Interacts (via N-terminus) with CTNNA1. Interacts with CLDN18. Interacts with CLDN16 (via TRV motif); this is a prerequisite for anchoring of CLDN16 at the tight junction. Interacts with PKP1; the interaction facilitates TJP1/ZO-1 localization to the plasma membrane. Interacts with PATJ (via PDZ1-6 domains); the interaction is required for attachment and extension of TJP1/ZO1 condensates along the apical cell interface. Phosphorylated at tyrosine redidues in response to epidermal growth factor (EGF). This response is dependent on an intact actin microfilament system. Dephosphorylated by PTPRJ. As to expression, expressed between ameloblasts, at ameloblast-ameloblast junctions and in the stratum intermedium during pre-secretory and secretory stages of tooth development (at protein level).

It localises to the cell membrane. Its subcellular location is the cell junction. The protein localises to the tight junction. The protein resides in the gap junction. It is found in the cytoplasm. It localises to the myofibril. Its subcellular location is the sarcomere. The protein localises to the i band. Functionally, tjp1, TjpP2, and Tjp3 are closely related scaffolding proteins that link tight junction (TJ) transmembrane proteins such as claudins, junctional adhesion molecules, and occludin to the actin cytoskeleton. Forms a multistranded TJP1/ZO1 condensate which elongates to form a tight junction belt, the belt is anchored at the apical cell membrane via interaction with PATJ. The tight junction acts to limit movement of substances through the paracellular space and as a boundary between the compositionally distinct apical and basolateral plasma membrane domains of epithelial and endothelial cells. Necessary for lumenogenesis, and particularly efficient epithelial polarization and barrier formation. Plays a role in the regulation of cell migration by targeting Cdc42bpb to the leading edge of migrating cells. Plays an important role in podosome formation and associated function, thus regulating cell adhesion and matrix remodeling. With Tjp2 and TJjp3, participates in the junctional retention and stability of the transcription factor Dbpa, but is not involved in its shuttling to the nucleus. May play a role in mediating cell morphology changes during ameloblast differentiation via its role in tight junctions. In Mus musculus (Mouse), this protein is Tight junction protein 1.